Here is a 158-residue protein sequence, read N- to C-terminus: Ribonuclease H (158 aa).

In terms of domain architecture, RNase H type-1 spans 1 to 147 (MKVTIYTDGA…CDVLATTAAD (147 aa)). Mg(2+)-binding residues include aspartate 8, glutamate 52, aspartate 74, and aspartate 139.

Belongs to the RNase H family. Monomer. Requires Mg(2+) as cofactor.

The protein localises to the cytoplasm. It catalyses the reaction Endonucleolytic cleavage to 5'-phosphomonoester.. Its function is as follows. Endonuclease that specifically degrades the RNA of RNA-DNA hybrids. The chain is Ribonuclease H from Lachnoclostridium phytofermentans (strain ATCC 700394 / DSM 18823 / ISDg) (Clostridium phytofermentans).